The primary structure comprises 391 residues: MSIVRMTDLALSGKRVLIRQDLNVPIDQGRITSEQRIIASLPTIRVALERGAAVMVTSHLGRPKEGVWSEEDSLAPVAKRLSQLLGIEVPLRRDWVDGVQVAPGQLVLLENCRMNVGEAENDEALARKYAALCDVFVMDAFGTAHRAQASTHGVICCAAIAAGGPLLMAELDALSRGLKHPVKPLLAIVGGSKVSTKLELLSNLVNNVEQLITGGGIANTFLAAAGYPIGKSLYEADLIETAREIITVAKARGAEIPLPTDVVVAKQFLPGVTATVKTVDAIVADDLILDIGPQTARHYAALIETAATVVWNGPVGVFEFDAFSKGTEVLARAVAASSAFSIAGGGDTLAAIDKYGVADQISYISTGGGAFLEFLEGKTLPAVAALQARSG.

Residues 21–23 (DLN), Arg-36, 59–62 (HLGR), Arg-113, and Arg-146 contribute to the substrate site. Residues Lys-197, Glu-319, and 345 to 348 (GGDT) contribute to the ATP site.

It belongs to the phosphoglycerate kinase family. Monomer.

It localises to the cytoplasm. The catalysed reaction is (2R)-3-phosphoglycerate + ATP = (2R)-3-phospho-glyceroyl phosphate + ADP. Its pathway is carbohydrate degradation; glycolysis; pyruvate from D-glyceraldehyde 3-phosphate: step 2/5. The sequence is that of Phosphoglycerate kinase from Xylella fastidiosa (strain Temecula1 / ATCC 700964).